A 459-amino-acid chain; its full sequence is Asperlicin C monooxygenase (459 aa).

Aspartate 49, alanine 62, and arginine 121 together coordinate FAD. Arginine 199 is a catalytic residue. Positions 323 and 336 each coordinate FAD.

It belongs to the paxM FAD-dependent monooxygenase family. FAD is required as a cofactor.

The enzyme catalyses asperlicin C + NADPH + O2 + H(+) = asperlicin E + NADP(+) + H2O. The catalysed reaction is asperlicin C + NADH + O2 + H(+) = asperlicin E + NAD(+) + H2O. Its function is as follows. Catalyzes the conversion of asperlicin A to form asperlicin E, a potent cholecystokinin receptor CCK(A) antagonist. The chain is Asperlicin C monooxygenase from Petromyces alliaceus (Aspergillus alliaceus).